Reading from the N-terminus, the 1527-residue chain is Lysophospholipase nte1 (1527 aa).

The Cytoplasmic portion of the chain corresponds to 1–69 (MADDGGPFPL…PPPAPSTMVG (69 aa)). Residues 70–90 (WIGWVFSFVFQVIPSILYWAI) traverse the membrane as a helical segment. Topologically, residues 91–112 (TFCTITLPTWLFTLFSMSLTFT) are lumenal. Residues 113–133 (MNFTTLLLIALAIVSTVSWFI) traverse the membrane as a helical segment. Residues 134–1527 (RYRFLNMYSR…RTLAPRRASI (1394 aa)) are Cytoplasmic-facing. Disordered regions lie at residues 240–259 (ADHE…GQNV), 299–387 (LSSS…HPDI), 576–596 (EKEQ…PFHR), and 750–785 (AHGE…RRQS). The segment covering 355-373 (HLEESRGTPDHDHQPESRT) has biased composition (basic and acidic residues). A nucleoside 3',5'-cyclic phosphate contacts are provided by residues 685–804 (GGTS…VGSV) and 846–966 (RLTS…IAQR). Residues 761–771 (RTTTASSRTSS) are compositionally biased toward low complexity. One can recognise a PNPLA domain in the interval 1224–1388 (LVLGGGGARG…IDNLTVPHMK (165 aa)). Residues 1228–1233 (GGGARG) carry the GXGXXG motif. The GXSXG signature appears at 1255–1259 (GTSIG). The active-site Nucleophile is the S1257. The Proton acceptor role is filled by D1375. A DGA/G motif is present at residues 1375-1377 (DGG).

This sequence belongs to the NTE family.

It localises to the endoplasmic reticulum membrane. The enzyme catalyses a 1-acyl-sn-glycero-3-phosphocholine + H2O = sn-glycerol 3-phosphocholine + a fatty acid + H(+). Inhibited by organophosphorus esters. In terms of biological role, intracellular phospholipase B that catalyzes the double deacylation of phosphatidylcholine (PC) to glycerophosphocholine (GroPCho). Plays an important role in membrane lipid homeostasis. Responsible for the rapid PC turnover in response to inositol, elevated temperatures, or when choline is present in the growth medium. This is Lysophospholipase nte1 (nte1) from Aspergillus terreus (strain NIH 2624 / FGSC A1156).